We begin with the raw amino-acid sequence, 673 residues long: DNA ligase (673 aa).

NAD(+) contacts are provided by residues 33-37 (DYEYD), 82-83 (SL), and E113. K115 serves as the catalytic N6-AMP-lysine intermediate. R136, E170, K285, and K309 together coordinate NAD(+). Zn(2+)-binding residues include C403, C406, C421, and C426. One can recognise a BRCT domain in the interval 583–672 (AKSDILKGYT…SHEEVEKILM (90 aa)).

Belongs to the NAD-dependent DNA ligase family. LigA subfamily. Requires Mg(2+) as cofactor. It depends on Mn(2+) as a cofactor.

It carries out the reaction NAD(+) + (deoxyribonucleotide)n-3'-hydroxyl + 5'-phospho-(deoxyribonucleotide)m = (deoxyribonucleotide)n+m + AMP + beta-nicotinamide D-nucleotide.. In terms of biological role, DNA ligase that catalyzes the formation of phosphodiester linkages between 5'-phosphoryl and 3'-hydroxyl groups in double-stranded DNA using NAD as a coenzyme and as the energy source for the reaction. It is essential for DNA replication and repair of damaged DNA. This Caldicellulosiruptor saccharolyticus (strain ATCC 43494 / DSM 8903 / Tp8T 6331) protein is DNA ligase.